Consider the following 170-residue polypeptide: Cysteine-rich uncharacterized protein 241L (170 aa).

The chain is Cysteine-rich uncharacterized protein 241L from Acheta domesticus (House cricket).